The sequence spans 472 residues: 3-isopropylmalate dehydratase large subunit (472 aa).

The tract at residues 289 to 312 (TWGTNPAQGTGVSQVVPSPDDAKD) is disordered. A compositionally biased stretch (polar residues) spans 290–304 (WGTNPAQGTGVSQVV). Residues C347, C407, and C410 each contribute to the [4Fe-4S] cluster site.

This sequence belongs to the aconitase/IPM isomerase family. LeuC type 1 subfamily. As to quaternary structure, heterodimer of LeuC and LeuD. Requires [4Fe-4S] cluster as cofactor.

The catalysed reaction is (2R,3S)-3-isopropylmalate = (2S)-2-isopropylmalate. Its pathway is amino-acid biosynthesis; L-leucine biosynthesis; L-leucine from 3-methyl-2-oxobutanoate: step 2/4. Functionally, catalyzes the isomerization between 2-isopropylmalate and 3-isopropylmalate, via the formation of 2-isopropylmaleate. The sequence is that of 3-isopropylmalate dehydratase large subunit from Halalkalibacterium halodurans (strain ATCC BAA-125 / DSM 18197 / FERM 7344 / JCM 9153 / C-125) (Bacillus halodurans).